We begin with the raw amino-acid sequence, 308 residues long: UPF0282 protein M1425_2116 (308 aa).

Belongs to the UPF0282 family.

The chain is UPF0282 protein M1425_2116 from Saccharolobus islandicus (strain M.14.25 / Kamchatka #1) (Sulfolobus islandicus).